Consider the following 216-residue polypeptide: Small ribosomal subunit protein uS3 (216 aa).

Residues 38-106 form the KH type-2 domain; that stretch reads LRKMLKDKLY…QANIEIKEVR (69 aa).

This sequence belongs to the universal ribosomal protein uS3 family. Part of the 30S ribosomal subunit. Forms a tight complex with proteins S10 and S14.

Its function is as follows. Binds the lower part of the 30S subunit head. Binds mRNA in the 70S ribosome, positioning it for translation. The sequence is that of Small ribosomal subunit protein uS3 from Thermodesulfovibrio yellowstonii (strain ATCC 51303 / DSM 11347 / YP87).